A 251-amino-acid chain; its full sequence is 5'-nucleotidase SurE (251 aa).

Positions 8, 9, 42, and 94 each coordinate a divalent metal cation.

Belongs to the SurE nucleotidase family. A divalent metal cation is required as a cofactor.

The protein resides in the cytoplasm. It carries out the reaction a ribonucleoside 5'-phosphate + H2O = a ribonucleoside + phosphate. In terms of biological role, nucleotidase that shows phosphatase activity on nucleoside 5'-monophosphates. This chain is 5'-nucleotidase SurE, found in Hydrogenovibrio crunogenus (strain DSM 25203 / XCL-2) (Thiomicrospira crunogena).